The primary structure comprises 568 residues: MSPPQKPPKLRHACNECHASKVRCSGERTGCRRCVYNQQKCTYSVSMVGKVQGHRRRAAVTGTAPRSGAQSLNINTSTEIISVANADVIHDEANGNDLNSKPNDVPVESSEGITSSPAHCSILPGGNNGKVTTSSAPENFSTSLESIDTSSLETPIIEHEFSWDFSSDERADALNSLALENPSNVDSMKNPEYGDFEYDFSIHEVPATSSSQDDSRSPKRQIADPIPISPVPKFYPSRKRTHSDLSEKQAQHAQNDLRWRSQSQSYKRPTISTQHHNHSFSREMYEYPESSASFDADCSFDRGSTSHSTTSQTNMNHQSMNRIPQTTQSNRISFTAQSHYMVSSMSSSVTHYEASWRFTSKCFIIISKLQKLLRDSSSLSLDVILATNKSAISELAQMFDSTLASNTARSTSPEDFFSIHSEIQPSNTCDTSLSTDFIPLMVYMIALKCIHDLYSQACFIFTQDDHRSRSLSTPSPRNTPSTSNSPFSNPFGLPQLDFGTFKIDIADQRRLFSEIIARELGNCLSACTRLRSYFLMQPGDISTSTGLIEEMFLGIEEGLQSMIKRVKI.

A DNA-binding region (zn(2)-C6 fungal-type) is located at residues 14–41; the sequence is CNECHASKVRCSGERTGCRRCVYNQQKC. Disordered regions lie at residues 92–114, 207–278, and 467–490; these read EANG…EGIT, ATSS…HHNH, and RSRS…FSNP. The segment covering 242–259 has biased composition (basic and acidic residues); it reads HSDLSEKQAQHAQNDLRW. Residues 260–274 are compositionally biased toward polar residues; the sequence is RSQSQSYKRPTISTQ. Residues 470-490 show a composition bias toward low complexity; it reads SLSTPSPRNTPSTSNSPFSNP.

Its subcellular location is the nucleus. Transcription factor that probably regulates the gene clusters that mediates the biosynthesis of botcinin acid and its botcinin derivatives, acetate-derived polyketides that contribute to virulence when combined with the sesquiterpene botrydial. Botcinin acid and its derivatives have been shown to induce chlorosis and necrosis during host plant infection, but also have antifungal activities. In Botryotinia fuckeliana (strain B05.10) (Noble rot fungus), this protein is C6 finger domain transcription factor BOA13.